A 170-amino-acid chain; its full sequence is Lipoprotein signal peptidase (170 aa).

A run of 2 helical transmembrane segments spans residues tyrosine 71–asparagine 91 and alanine 97–phenylalanine 116. Catalysis depends on residues aspartate 122 and aspartate 140. Residues tryptophan 131–valine 151 form a helical membrane-spanning segment.

This sequence belongs to the peptidase A8 family.

It is found in the cell inner membrane. The enzyme catalyses Release of signal peptides from bacterial membrane prolipoproteins. Hydrolyzes -Xaa-Yaa-Zaa-|-(S,diacylglyceryl)Cys-, in which Xaa is hydrophobic (preferably Leu), and Yaa (Ala or Ser) and Zaa (Gly or Ala) have small, neutral side chains.. It functions in the pathway protein modification; lipoprotein biosynthesis (signal peptide cleavage). Its function is as follows. This protein specifically catalyzes the removal of signal peptides from prolipoproteins. In Serratia marcescens, this protein is Lipoprotein signal peptidase.